The following is a 246-amino-acid chain: tRNA (guanine-N(1)-)-methyltransferase (246 aa).

S-adenosyl-L-methionine is bound by residues Gly113 and 133–138 (IGDYVL).

This sequence belongs to the RNA methyltransferase TrmD family. Homodimer.

It localises to the cytoplasm. It catalyses the reaction guanosine(37) in tRNA + S-adenosyl-L-methionine = N(1)-methylguanosine(37) in tRNA + S-adenosyl-L-homocysteine + H(+). Functionally, specifically methylates guanosine-37 in various tRNAs. In Yersinia enterocolitica serotype O:8 / biotype 1B (strain NCTC 13174 / 8081), this protein is tRNA (guanine-N(1)-)-methyltransferase.